A 693-amino-acid polypeptide reads, in one-letter code: Polyribonucleotide nucleotidyltransferase (693 aa).

Positions 489 and 495 each coordinate Mg(2+). The region spanning 556–615 (PQIHVMNINPAKIKDVVGRGGATVKGIVEKTGAQIDTSDSGEVKVFAKDKKSMDMAVAMI) is the KH domain. An S1 motif domain is found at 625 to 693 (GQVYKGKIVK…GRVKLSLVAR (69 aa)).

Belongs to the polyribonucleotide nucleotidyltransferase family. As to quaternary structure, component of the RNA degradosome, which is a multiprotein complex involved in RNA processing and mRNA degradation. The cofactor is Mg(2+).

It is found in the cytoplasm. The catalysed reaction is RNA(n+1) + phosphate = RNA(n) + a ribonucleoside 5'-diphosphate. Functionally, involved in mRNA degradation. Catalyzes the phosphorolysis of single-stranded polyribonucleotides processively in the 3'- to 5'-direction. The chain is Polyribonucleotide nucleotidyltransferase from Francisella tularensis subsp. tularensis (strain FSC 198).